Consider the following 544-residue polypeptide: Protein anon-37Cs (544 aa).

Its subcellular location is the cytoplasm. In terms of biological role, has a non-vital function. The chain is Protein anon-37Cs (anon-37Cs) from Drosophila lebanonensis (Fruit fly).